A 33-amino-acid polypeptide reads, in one-letter code: Natriuretic peptide NP2 (33 aa).

Cys10 and Cys26 form a disulfide bridge.

As to expression, expressed by the venom gland.

The protein localises to the secreted. Functionally, snake venom natriuretic peptide that shows an increase in perfusion pressure, urinary flow and glomerular filtration rate. Reduces total and proximal tubular transport of sodium. In the aortic ring assay, causes a relaxant effect in endothelium-intact thoracic aortic rings precontracted with phenylephrine in the presence and absence of isatin, a natriuretic receptor antagonist. The sequence is that of Natriuretic peptide NP2 from Crotalus durissus cascavella (Northeastern Brazilian rattlesnake).